The following is a 181-amino-acid chain: ATP synthase subunit delta (181 aa).

Belongs to the ATPase delta chain family. As to quaternary structure, F-type ATPases have 2 components, F(1) - the catalytic core - and F(0) - the membrane proton channel. F(1) has five subunits: alpha(3), beta(3), gamma(1), delta(1), epsilon(1). F(0) has three main subunits: a(1), b(2) and c(10-14). The alpha and beta chains form an alternating ring which encloses part of the gamma chain. F(1) is attached to F(0) by a central stalk formed by the gamma and epsilon chains, while a peripheral stalk is formed by the delta and b chains. The F(1)F(0) complex interacts with SpoIIIJ and YqjG; YqgA is found in the same complex. Interacts with FloT.

The protein resides in the cell membrane. It localises to the membrane raft. F(1)F(0) ATP synthase produces ATP from ADP in the presence of a proton or sodium gradient. F-type ATPases consist of two structural domains, F(1) containing the extramembraneous catalytic core and F(0) containing the membrane proton channel, linked together by a central stalk and a peripheral stalk. During catalysis, ATP synthesis in the catalytic domain of F(1) is coupled via a rotary mechanism of the central stalk subunits to proton translocation. Functionally, this protein is part of the stalk that links CF(0) to CF(1). It either transmits conformational changes from CF(0) to CF(1) or is implicated in proton conduction. The chain is ATP synthase subunit delta from Bacillus subtilis (strain 168).